Here is an 83-residue protein sequence, read N- to C-terminus: Kunitz-type serine protease inhibitor homolog beta-bungarotoxin B5 chain (83 aa).

Residues 1-24 (MSSGGLLLLLGLLTFCAELTPVSS) form the signal peptide. Residues 31 to 81 (CNLPPDPGPCHDNKFAFYHHPASNKCKEFVYGGCGGNDNRFKTRNKCQCTC) enclose the BPTI/Kunitz inhibitor domain. Intrachain disulfides connect Cys31/Cys81, Cys40/Cys64, and Cys56/Cys77.

It belongs to the venom Kunitz-type family. Heterodimer; disulfide-linked. The A chains have phospholipase A2 activity and the B chains show homology with the basic protease inhibitors. In terms of tissue distribution, expressed by the venom gland.

Its subcellular location is the secreted. In terms of biological role, beta-bungarotoxins are presynaptic neurotoxins of the venom. The B chain is homologous to venom basic protease inhibitors but has no protease inhibitor activity and blocks voltage-gated potassium channels (Kv). This chain is Kunitz-type serine protease inhibitor homolog beta-bungarotoxin B5 chain, found in Bungarus multicinctus (Many-banded krait).